Consider the following 502-residue polypeptide: DEP domain-containing protein 7 (502 aa).

In terms of domain architecture, DEP spans leucine 37–threonine 127.

This sequence belongs to the DEPDC7 family.

The chain is DEP domain-containing protein 7 (DEPDC7) from Macaca fascicularis (Crab-eating macaque).